We begin with the raw amino-acid sequence, 246 residues long: tRNA (guanine-N(1)-)-methyltransferase (246 aa).

Residues Gly-113 and 133–138 each bind S-adenosyl-L-methionine; that span reads IGDYVL.

The protein belongs to the RNA methyltransferase TrmD family. As to quaternary structure, homodimer.

The protein resides in the cytoplasm. The catalysed reaction is guanosine(37) in tRNA + S-adenosyl-L-methionine = N(1)-methylguanosine(37) in tRNA + S-adenosyl-L-homocysteine + H(+). Functionally, specifically methylates guanosine-37 in various tRNAs. The protein is tRNA (guanine-N(1)-)-methyltransferase of Yersinia pseudotuberculosis serotype O:1b (strain IP 31758).